A 1101-amino-acid chain; its full sequence is MTYAELCVTTNFTFLTGASHPEEMITRAAELGLHAIAITDRNSLAGVVRAYAALKELRREADEAIRIRSQHRIDSCSRQEVGHPQPIARPEAPRLPRLITGCRLVLRDSPLHWIALPRDRAAYQRLTRLLTLGKRRAEKGDCHLDLADLLAGCTGMILIALPQGRLDGALPHLQQVQRRFPGHVFLGAAPRYDGSDQAWLAACARLALRSSAPMVAVGDALMHRANRRQLADVLTCMREHITIDRIGTRALPNAERRLKGHADMARLFRDHPAALRRTLDIAARCSFCLSELSYEYPDEVAEGETPQARLERLTAEGIVRRYPGGAPQRVHELVAKELKLVAELGFPAYFLTVHDIVQFARSQGILCQGRGSAANSILCYLLGITDVSPDQIAMVFERFISKYRGEPPDIDVDFEHERREEVIQWIYQRYGRHRAGLCATVIHFRSRAAIREVGKVMGLSQDVTASLSGQIWGQSNGGADPERMRELGLDPEDRRLALTIRLIGEIIGFPRHLSQHVGGFVITRGRLDELAPIENAAMEDRTLIEWDKDDIDTLGILKVDVLGLGMLTCIRKAFDLMREHEQRHLSIDTVPQEDAATYDMLCAADAVGVFQVESRAQMNFLPRMRPRTFYDLVIEVAIVRPGPIQGGMVQPYIRRRQGLEKAEPFGPELAAVTARTLGVPLFQEQALQIAVVGAGYTAEEADHLRRSLASFRRMGTIGAHRDTFIAGMRRNGYSQEVAERCFGQIEGFADYGFPESHAAAFAMLAYVSAWLKCHHPAIFACALLNAQPMGFYAPAQIVRDARDHQVELRPICVNASDWDNRLERRADGALALRLGFRQIKGFREEDAAWIVAARGNGYPDPQALWLRAGVTPAVLERLAEADAFADMGIGRRDALWQVRAIRGQAPLPLFNDPLDGEIIHEPQVTLPAMHLGEEVVEDYVSMRLTLRAHPMELLRPAIPGLTPHDKLASVAAHRVSVCGLVITRQRPGTASGVIFLTLEDETGVSNVVVWPKIYEQFRRIVMGGRLLRVTGTLQREGIVVHLIAQRIEDLSPRLADLGHPMDSAVGQTTPQTDSAPRPRPQPRAMHPREQAKRLFPSRDFH.

A disordered region spans residues 1055 to 1101 (ADLGHPMDSAVGQTTPQTDSAPRPRPQPRAMHPREQAKRLFPSRDFH). Residues 1065–1074 (VGQTTPQTDS) are compositionally biased toward polar residues. Basic and acidic residues predominate over residues 1086–1101 (HPREQAKRLFPSRDFH).

The protein belongs to the DNA polymerase type-C family. DnaE2 subfamily.

It localises to the cytoplasm. It carries out the reaction DNA(n) + a 2'-deoxyribonucleoside 5'-triphosphate = DNA(n+1) + diphosphate. In terms of biological role, DNA polymerase involved in damage-induced mutagenesis and translesion synthesis (TLS). It is not the major replicative DNA polymerase. The sequence is that of Error-prone DNA polymerase from Ruegeria pomeroyi (strain ATCC 700808 / DSM 15171 / DSS-3) (Silicibacter pomeroyi).